Here is a 341-residue protein sequence, read N- to C-terminus: Serpentine receptor class epsilon-12 (341 aa).

7 helical membrane passes run 30-50, 57-77, 101-121, 140-160, 167-187, 230-250, and 262-282; these read TAFYVADTINMMFYIWVLFSA, FTLVSGTQYVIHFFDNLAIIV, AMTFSVYCIVAAMCSLPFSIL, YISYALVFLLNFIGIIGAILL, IFVVAFLMILNLFALLTNQFL, LNFIILYMGFMNVCLVISVLF, and ICSLALDASIFFYSFAIPQIM.

The protein belongs to the nematode receptor-like protein sre family.

Its subcellular location is the membrane. In Caenorhabditis elegans, this protein is Serpentine receptor class epsilon-12 (sre-12).